The sequence spans 144 residues: Large ribosomal subunit protein uL15 (144 aa).

The interval 1–57 (MKLNDLSPAPGSRREKHRPGRGIGSGLGKTGGRGHKGQSSRSGGTIAPGFEGGQQPL) is disordered. Over residues 21 to 31 (RGIGSGLGKTG) the composition is skewed to gly residues.

This sequence belongs to the universal ribosomal protein uL15 family. In terms of assembly, part of the 50S ribosomal subunit.

Binds to the 23S rRNA. This chain is Large ribosomal subunit protein uL15, found in Pseudomonas savastanoi pv. phaseolicola (strain 1448A / Race 6) (Pseudomonas syringae pv. phaseolicola (strain 1448A / Race 6)).